Here is a 158-residue protein sequence, read N- to C-terminus: Transcription elongation factor GreB (158 aa).

This sequence belongs to the GreA/GreB family. GreB subfamily.

In terms of biological role, necessary for efficient RNA polymerase transcription elongation past template-encoded arresting sites. The arresting sites in DNA have the property of trapping a certain fraction of elongating RNA polymerases that pass through, resulting in locked ternary complexes. Cleavage of the nascent transcript by cleavage factors such as GreA or GreB allows the resumption of elongation from the new 3'terminus. GreB releases sequences of up to 9 nucleotides in length. The chain is Transcription elongation factor GreB from Escherichia coli (strain K12).